A 232-amino-acid polypeptide reads, in one-letter code: 7-cyano-7-deazaguanine synthase (232 aa).

7–17 (CSGGLDSVSLA) lines the ATP pocket. Residues cysteine 185, cysteine 193, cysteine 196, and cysteine 199 each contribute to the Zn(2+) site.

The protein belongs to the QueC family. Zn(2+) is required as a cofactor.

It catalyses the reaction 7-carboxy-7-deazaguanine + NH4(+) + ATP = 7-cyano-7-deazaguanine + ADP + phosphate + H2O + H(+). The protein operates within purine metabolism; 7-cyano-7-deazaguanine biosynthesis. Catalyzes the ATP-dependent conversion of 7-carboxy-7-deazaguanine (CDG) to 7-cyano-7-deazaguanine (preQ(0)). This Chelativorans sp. (strain BNC1) protein is 7-cyano-7-deazaguanine synthase.